The primary structure comprises 1083 residues: UPF0182 protein BAD_0641 (1083 aa).

A disordered region spans residues 1–72 (MSFFDMFGPM…TSKPNRPRKP (72 aa)). A run of 7 helical transmembrane segments spans residues 78–98 (IFIG…ALAQ), 125–145 (LWLA…TLAI), 178–198 (IAVV…NANW), 239–259 (SLLL…MGGI), 281–301 (IGIW…LGVF), 325–345 (VTFI…LWIM), and 372–392 (VAIA…PVLL). The interval 976 to 1061 (DSGASAGDAE…SDAAMKKGDW (86 aa)) is disordered. Basic and acidic residues-rich tracts occupy residues 991 to 1013 (TDDK…DGKQ) and 1050 to 1060 (KDSDAAMKKGD).

It belongs to the UPF0182 family.

Its subcellular location is the cell membrane. In Bifidobacterium adolescentis (strain ATCC 15703 / DSM 20083 / NCTC 11814 / E194a), this protein is UPF0182 protein BAD_0641.